A 194-amino-acid chain; its full sequence is Glycerol-3-phosphate acyltransferase (194 aa).

A run of 5 helical transmembrane segments spans residues 4–24 (EIVL…LLLA), 78–98 (EIWV…TVFL), 110–130 (LGVF…IFVF), 137–157 (YVSL…ALIE), and 161–181 (LLIT…RENI).

Belongs to the PlsY family. As to quaternary structure, probably interacts with PlsX.

It is found in the cell inner membrane. It carries out the reaction an acyl phosphate + sn-glycerol 3-phosphate = a 1-acyl-sn-glycero-3-phosphate + phosphate. The protein operates within lipid metabolism; phospholipid metabolism. In terms of biological role, catalyzes the transfer of an acyl group from acyl-phosphate (acyl-PO(4)) to glycerol-3-phosphate (G3P) to form lysophosphatidic acid (LPA). This enzyme utilizes acyl-phosphate as fatty acyl donor, but not acyl-CoA or acyl-ACP. The sequence is that of Glycerol-3-phosphate acyltransferase from Geotalea daltonii (strain DSM 22248 / JCM 15807 / FRC-32) (Geobacter daltonii).